The following is a 68-amino-acid chain: Putative membrane protein insertion efficiency factor (68 aa).

Belongs to the UPF0161 family.

It localises to the cell membrane. Functionally, could be involved in insertion of integral membrane proteins into the membrane. The sequence is that of Putative membrane protein insertion efficiency factor from Syntrophomonas wolfei subsp. wolfei (strain DSM 2245B / Goettingen).